The primary structure comprises 142 residues: MPPKKKLAAVVKVQLPAGQATPAPPVGTALGPHGVNIMEFCKQYNAATESQRGNIIPVEISIYEDRSFSFVTKTPPAPALILKAAGLEKGASTPSRSVAGSITRDQVREIAQTKLPDLNTTSLEAAEKIIAGTARSMGIEVK.

The protein belongs to the universal ribosomal protein uL11 family. As to quaternary structure, part of the ribosomal stalk of the 50S ribosomal subunit. Interacts with L10 and the large rRNA to form the base of the stalk. L10 forms an elongated spine to which L12 dimers bind in a sequential fashion forming a multimeric L10(L12)X complex. In terms of processing, one or more lysine residues are methylated.

In terms of biological role, forms part of the ribosomal stalk which helps the ribosome interact with GTP-bound translation factors. This is Large ribosomal subunit protein uL11 from Thermobifida fusca (strain YX).